A 477-amino-acid polypeptide reads, in one-letter code: Probable cytosolic Fe-S cluster assembly factor GG21400 (477 aa).

Positions 23, 68, 71, 74, 187, 243, 395, and 399 each coordinate [4Fe-4S] cluster.

This sequence belongs to the NARF family.

Functionally, component of the cytosolic iron-sulfur (Fe/S) protein assembly machinery. Required for maturation of extramitochondrial Fe/S proteins. This is Probable cytosolic Fe-S cluster assembly factor GG21400 from Drosophila erecta (Fruit fly).